Reading from the N-terminus, the 173-residue chain is Ferritin heavy chain (173 aa).

Residues 6 to 155 (QNFHEECERG…GYVTNLKRCG (150 aa)) enclose the Ferritin-like diiron domain. 5 residues coordinate Fe cation: Glu23, Glu58, His61, Glu103, and Gln137.

It belongs to the ferritin family. In terms of assembly, oligomer of 24 subunits. There are two types of subunits: L (light) chain and H (heavy) chain. The functional molecule is roughly spherical and contains a central cavity into which the insoluble mineral iron core is deposited.

Its subcellular location is the cytoplasm. It carries out the reaction 4 Fe(2+) + O2 + 4 H(+) = 4 Fe(3+) + 2 H2O. Stores iron in a soluble, non-toxic, readily available form. Important for iron homeostasis. Has ferroxidase activity. Iron is taken up in the ferrous form and deposited as ferric hydroxides after oxidation. This Echinococcus granulosus (Hydatid tapeworm) protein is Ferritin heavy chain.